A 204-amino-acid chain; its full sequence is Small ribosomal subunit protein uS4c (204 aa).

In terms of domain architecture, S4 RNA-binding spans 90 to 150 (MRLDNILYRL…GKKTDQLKTI (61 aa)).

It belongs to the universal ribosomal protein uS4 family. Part of the 30S ribosomal subunit. Contacts protein S5. The interaction surface between S4 and S5 is involved in control of translational fidelity.

The protein resides in the plastid. Its subcellular location is the chloroplast. One of the primary rRNA binding proteins, it binds directly to 16S rRNA where it nucleates assembly of the body of the 30S subunit. Its function is as follows. With S5 and S12 plays an important role in translational accuracy. The sequence is that of Small ribosomal subunit protein uS4c (rps4) from Gnetum parvifolium (Small-leaved jointfir).